Consider the following 767-residue polypeptide: Protein ROLLING AND ERECT LEAF 2 (767 aa).

3 disordered regions span residues 1–20, 78–187, and 201–309; these read MGCTASKVEQEDTVRRCKER, PALA…SEFF, and RELE…SSTV. Composition is skewed to pro residues over residues 81-90 and 110-126; these read APTPTPPPPS and APPPPPPTQSHQPPPPV. Over residues 145–155 the composition is skewed to low complexity; the sequence is SDSSVASPARS. The span at 201–210 shows a compositional bias: basic and acidic residues; it reads RELEEEEKAR. Positions 221–232 are enriched in acidic residues; the sequence is EDEVDDDDDERE. Positions 255–264 are enriched in basic and acidic residues; it reads TRSEEGEMGN.

As to expression, highly expressed in young leaves and panicles. Expressed at low levels in roots.

It localises to the cell membrane. Involved in the regulation of leaf shape formation. May function by coordinating the expression of genes associated with leaf and bulliform cell development. The sequence is that of Protein ROLLING AND ERECT LEAF 2 from Oryza sativa subsp. japonica (Rice).